We begin with the raw amino-acid sequence, 362 residues long: Aminomethyltransferase (362 aa).

This sequence belongs to the GcvT family. In terms of assembly, the glycine cleavage system is composed of four proteins: P, T, L and H.

It catalyses the reaction N(6)-[(R)-S(8)-aminomethyldihydrolipoyl]-L-lysyl-[protein] + (6S)-5,6,7,8-tetrahydrofolate = N(6)-[(R)-dihydrolipoyl]-L-lysyl-[protein] + (6R)-5,10-methylene-5,6,7,8-tetrahydrofolate + NH4(+). Its function is as follows. The glycine cleavage system catalyzes the degradation of glycine. In Chromobacterium violaceum (strain ATCC 12472 / DSM 30191 / JCM 1249 / CCUG 213 / NBRC 12614 / NCIMB 9131 / NCTC 9757 / MK), this protein is Aminomethyltransferase.